The chain runs to 785 residues: Disintegrin and metalloproteinase domain-containing protein B (785 aa).

Positions 1–26 (MRFLKSALPFVASALSLLSVQAAARS) are cleaved as a signal peptide. The Extracellular portion of the chain corresponds to 27 to 703 (QEPSAIQHVS…GSWVEQHKNL (677 aa)). The Peptidase M12B domain occupies 279–507 (KQVALVGIAA…NSVKSSCLSD (229 aa)). 3 N-linked (GlcNAc...) asparagine glycosylation sites follow: Asn322, Asn329, and Asn355. Intrachain disulfides connect Cys398–Cys492 and Cys446–Cys464. Position 429 (His429) interacts with Zn(2+). Glu430 is an active-site residue. Zn(2+) contacts are provided by His433 and His439. The region spanning 516 to 605 (GSQCGNGIVE…TCPADSFKKD (90 aa)) is the Disintegrin domain. Asn561, Asn593, and Asn640 each carry an N-linked (GlcNAc...) asparagine glycan. Residues Cys577 and Cys597 are joined by a disulfide bond. Residues 704–724 (VIGVACGVGGLLVLSILWCMI) form a helical membrane-spanning segment. Residues 725–785 (NRCRRARTVV…GPYQSATRYA (61 aa)) lie on the Cytoplasmic side of the membrane. Residues 737-785 (PPMRPWPGPMPPPPPQMGQWAGPNRGYQGLRAEPPPPYPGPYQSATRYA) are disordered. Residues 739 to 752 (MRPWPGPMPPPPPQ) are compositionally biased toward pro residues.

The cofactor is Zn(2+).

Its subcellular location is the membrane. Probable zinc protease. The protein is Disintegrin and metalloproteinase domain-containing protein B (ADM-B) of Aspergillus fumigatus (strain ATCC MYA-4609 / CBS 101355 / FGSC A1100 / Af293) (Neosartorya fumigata).